A 225-amino-acid polypeptide reads, in one-letter code: MIHYLHFIGEFCFSSAVKVVEWFSENLFLKRSTMALSKRGFVMTSNARFHGEEEELELGLGSVRFTRGLGRKRILISSCVRESLSRSAVEIPVVSESPPVKSSLKRQRSRITIVSSSSSEKSRLECLPQDLLIRVICGVDHEDLKSLKLVSKSIREASLVAKTLHFAYTTPKKTRAFRNSIDLEEVSDSRHQEDDIEPPNAPRHYRWTKAKRKEQLSSVSAALFT.

An F-box domain is found at 121–169 (KSRLECLPQDLLIRVICGVDHEDLKSLKLVSKSIREASLVAKTLHFAYT).

As to quaternary structure, part of a SCF (ASK-cullin-F-box) protein ligase complex. Interacts with SKP1A/ASK1 and SPK1B/ASK2.

Its subcellular location is the nucleus. It functions in the pathway protein modification; protein ubiquitination. Functionally, component of SCF(ASK-cullin-F-box) E3 ubiquitin ligase complexes, which may mediate the ubiquitination and subsequent proteasomal degradation of target proteins. The protein is F-box protein SKIP27 (SKIP27) of Arabidopsis thaliana (Mouse-ear cress).